We begin with the raw amino-acid sequence, 230 residues long: Large ribosomal subunit protein uL1 (230 aa).

This sequence belongs to the universal ribosomal protein uL1 family. In terms of assembly, part of the 50S ribosomal subunit.

Binds directly to 23S rRNA. The L1 stalk is quite mobile in the ribosome, and is involved in E site tRNA release. In terms of biological role, protein L1 is also a translational repressor protein, it controls the translation of the L11 operon by binding to its mRNA. The protein is Large ribosomal subunit protein uL1 of Ligilactobacillus salivarius (strain UCC118) (Lactobacillus salivarius).